A 558-amino-acid polypeptide reads, in one-letter code: Urocanate hydratase (558 aa).

NAD(+) contacts are provided by residues 54 to 55 (GG), glutamine 132, 178 to 180 (GMG), glutamate 198, 244 to 245 (NA), 265 to 269 (QTSAH), 275 to 276 (YL), and tyrosine 324. Cysteine 412 is an active-site residue. Glycine 494 provides a ligand contact to NAD(+).

This sequence belongs to the urocanase family. The cofactor is NAD(+).

The protein localises to the cytoplasm. It carries out the reaction 4-imidazolone-5-propanoate = trans-urocanate + H2O. It participates in amino-acid degradation; L-histidine degradation into L-glutamate; N-formimidoyl-L-glutamate from L-histidine: step 2/3. In terms of biological role, catalyzes the conversion of urocanate to 4-imidazolone-5-propionate. This Acinetobacter baumannii (strain AB307-0294) protein is Urocanate hydratase.